We begin with the raw amino-acid sequence, 437 residues long: 3-ketoacyl-CoA thiolase (437 aa).

Cysteine 99 serves as the catalytic Acyl-thioester intermediate. Active-site proton acceptor residues include histidine 392 and cysteine 422.

This sequence belongs to the thiolase-like superfamily. Thiolase family. Heterotetramer of two alpha chains (FadJ) and two beta chains (FadI).

Its subcellular location is the cytoplasm. The enzyme catalyses an acyl-CoA + acetyl-CoA = a 3-oxoacyl-CoA + CoA. It functions in the pathway lipid metabolism; fatty acid beta-oxidation. Catalyzes the final step of fatty acid oxidation in which acetyl-CoA is released and the CoA ester of a fatty acid two carbons shorter is formed. The sequence is that of 3-ketoacyl-CoA thiolase from Erwinia tasmaniensis (strain DSM 17950 / CFBP 7177 / CIP 109463 / NCPPB 4357 / Et1/99).